A 141-amino-acid polypeptide reads, in one-letter code: Putative antiporter subunit mnhB2 (141 aa).

A run of 4 helical transmembrane segments spans residues 10 to 30, 35 to 55, 70 to 90, and 116 to 136; these read SVTK…FFAG, GGGF…FLAF, KLMI…MFFG, and LFEL…MLSI.

This sequence belongs to the CPA3 antiporters (TC 2.A.63) subunit B family. In terms of assembly, may form a heterooligomeric complex that consists of seven subunits: mnhA2, mnhB2, mnhC2, mnhD2, mnhE2, mnhF2 and mnhG2.

The protein localises to the cell membrane. In Staphylococcus epidermidis (strain ATCC 35984 / DSM 28319 / BCRC 17069 / CCUG 31568 / BM 3577 / RP62A), this protein is Putative antiporter subunit mnhB2 (mnhB2).